A 169-amino-acid polypeptide reads, in one-letter code: Probable RNA-binding protein EIF1AD (169 aa).

The S1-like domain occupies 14 to 89 (VLGDYVQPTE…VKAEIAFILY (76 aa)). Residues 115 to 169 (AKEKESSGIQSTEAQAKPQGEDSETDDDSGLFVNTNHVHYEDSEEESESEEDEEN) are disordered. Positions 156-169 (DSEEESESEEDEEN) are enriched in acidic residues.

This sequence belongs to the EIF1AD family.

It is found in the nucleus. In terms of biological role, may play a role into cellular response to oxidative stress. May decrease cell proliferation. This is Probable RNA-binding protein EIF1AD (eif1ad) from Xenopus laevis (African clawed frog).